We begin with the raw amino-acid sequence, 120 residues long: MESQAKVKISDKAEGIIERDVQNAVIGRREISLKVYHMGSGTPSRKDIIKAIIQAFASQENLVVVRKISTSYGAGISNVKLHIYKSREILEKIEPKYLLDRDAGTKQKKGGSKGGQGAKG.

The tract at residues 101–120 is disordered; it reads RDAGTKQKKGGSKGGQGAKG.

Belongs to the eukaryotic ribosomal protein eS24 family.

The sequence is that of Small ribosomal subunit protein eS24 from Saccharolobus islandicus (strain M.16.27) (Sulfolobus islandicus).